Here is a 372-residue protein sequence, read N- to C-terminus: Glutamate 5-kinase (372 aa).

Lys-14 serves as a coordination point for ATP. Residues Ser-54, Asp-141, and Asn-153 each coordinate substrate. Position 173 to 174 (Thr-173 to Asp-174) interacts with ATP. The PUA domain maps to Ala-280–Val-358.

The protein belongs to the glutamate 5-kinase family.

It is found in the cytoplasm. It carries out the reaction L-glutamate + ATP = L-glutamyl 5-phosphate + ADP. It functions in the pathway amino-acid biosynthesis; L-proline biosynthesis; L-glutamate 5-semialdehyde from L-glutamate: step 1/2. Its function is as follows. Catalyzes the transfer of a phosphate group to glutamate to form L-glutamate 5-phosphate. This is Glutamate 5-kinase from Janthinobacterium sp. (strain Marseille) (Minibacterium massiliensis).